Consider the following 320-residue polypeptide: Phosphate acetyltransferase (320 aa).

The protein belongs to the phosphate acetyltransferase and butyryltransferase family.

It is found in the cytoplasm. It carries out the reaction acetyl-CoA + phosphate = acetyl phosphate + CoA. It functions in the pathway metabolic intermediate biosynthesis; acetyl-CoA biosynthesis; acetyl-CoA from acetate: step 2/2. In Mycoplasma genitalium (strain ATCC 33530 / DSM 19775 / NCTC 10195 / G37) (Mycoplasmoides genitalium), this protein is Phosphate acetyltransferase (pta).